Reading from the N-terminus, the 157-residue chain is Small ribosomal subunit protein uS7 (157 aa).

This sequence belongs to the universal ribosomal protein uS7 family. In terms of assembly, part of the 30S ribosomal subunit. Contacts proteins S9 and S11.

In terms of biological role, one of the primary rRNA binding proteins, it binds directly to 16S rRNA where it nucleates assembly of the head domain of the 30S subunit. Is located at the subunit interface close to the decoding center, probably blocks exit of the E-site tRNA. In Acidovorax ebreus (strain TPSY) (Diaphorobacter sp. (strain TPSY)), this protein is Small ribosomal subunit protein uS7.